The primary structure comprises 305 residues: MSEEAPHPTRTPAAQRRQIVVITGLSGAGKSNALRAFEDAGYFCIDNLPPRMIPEVMEMSAGSPAGPEGVVVVADIRGRRYFGGELERVIDGVEGAGGWEKRLLFLEADDATLIRRYKESRRPHPAARGGDVLEAIRSERRELAPLRERADVVVDTSGLSALDVRLRFKRLAESLSGRLTVSLISFGFKHGAPLDVDTLFDVRFLPNPHYDPALRPLTGRDPAVREAVLAHPDAREFVERVCGLLSFLIPRYAAEGKTYFTVGVGCTGGRHRSVAIAEELARRLGAGRIGGEVDLYVRHRDLESG.

24–31 contacts ATP; the sequence is GLSGAGKS. Position 75–78 (75–78) interacts with GTP; it reads DIRG.

The protein belongs to the RapZ-like family.

Its function is as follows. Displays ATPase and GTPase activities. In Rubrobacter xylanophilus (strain DSM 9941 / JCM 11954 / NBRC 16129 / PRD-1), this protein is Nucleotide-binding protein Rxyl_2009.